We begin with the raw amino-acid sequence, 103 residues long: Large ribosomal subunit protein bL21 (103 aa).

It belongs to the bacterial ribosomal protein bL21 family. As to quaternary structure, part of the 50S ribosomal subunit. Contacts protein L20.

Its function is as follows. This protein binds to 23S rRNA in the presence of protein L20. The sequence is that of Large ribosomal subunit protein bL21 from Verminephrobacter eiseniae (strain EF01-2).